Consider the following 206-residue polypeptide: Large ribosomal subunit protein eL13x (206 aa).

The tract at residues 186 to 206 (NARHAGARAKRAAEAEKEEKK) is disordered. Basic and acidic residues predominate over residues 196–206 (RAAEAEKEEKK).

This sequence belongs to the eukaryotic ribosomal protein eL13 family.

This Arabidopsis thaliana (Mouse-ear cress) protein is Large ribosomal subunit protein eL13x (RPL13D).